Here is a 260-residue protein sequence, read N- to C-terminus: MHQLTIAGKAYRSRLLVGTGKYKDFAETRAAIDASGAEIVTVAIRRTNIGQDASQPNLLDAIPPSKFTILPNTAGCYTADDAVRTLRLARELLDGHPLCKLEVLGDPTNLFPNMPETLKAAETLVKEGFQVMVYCADDPIQCKMLEEIGCVAVMPLASLIGSGMGIVNPWNLRLIIDNAKVPIIVDAGVGTASDAAIAMELGCDGVLMNTAIAHAKDPILMASAMKKGVEAGREAFLAGRMARKYYSADPSSPTSGLIGS.

The active-site Schiff-base intermediate with DXP is the Lys100. 1-deoxy-D-xylulose 5-phosphate contacts are provided by residues Gly161, 187-188, and 209-210; these read AG and NT.

This sequence belongs to the ThiG family. As to quaternary structure, homotetramer. Forms heterodimers with either ThiH or ThiS.

Its subcellular location is the cytoplasm. The catalysed reaction is [ThiS sulfur-carrier protein]-C-terminal-Gly-aminoethanethioate + 2-iminoacetate + 1-deoxy-D-xylulose 5-phosphate = [ThiS sulfur-carrier protein]-C-terminal Gly-Gly + 2-[(2R,5Z)-2-carboxy-4-methylthiazol-5(2H)-ylidene]ethyl phosphate + 2 H2O + H(+). The protein operates within cofactor biosynthesis; thiamine diphosphate biosynthesis. Catalyzes the rearrangement of 1-deoxy-D-xylulose 5-phosphate (DXP) to produce the thiazole phosphate moiety of thiamine. Sulfur is provided by the thiocarboxylate moiety of the carrier protein ThiS. In vitro, sulfur can be provided by H(2)S. The polypeptide is Thiazole synthase (Dechloromonas aromatica (strain RCB)).